The primary structure comprises 146 residues: ATP synthase epsilon chain (146 aa).

Belongs to the ATPase epsilon chain family. F-type ATPases have 2 components, CF(1) - the catalytic core - and CF(0) - the membrane proton channel. CF(1) has five subunits: alpha(3), beta(3), gamma(1), delta(1), epsilon(1). CF(0) has three main subunits: a, b and c.

It localises to the cell inner membrane. Produces ATP from ADP in the presence of a proton gradient across the membrane. In Rhodospirillum centenum (strain ATCC 51521 / SW), this protein is ATP synthase epsilon chain.